Reading from the N-terminus, the 512-residue chain is 2-isopropylmalate synthase (512 aa).

Residues 5–268 (LIIFDTTLRD…DLGIATQHIL (264 aa)) enclose the Pyruvate carboxyltransferase domain. Positions 14, 202, 204, and 239 each coordinate Mn(2+). The tract at residues 394–512 (GFVSLFQQSE…NKADRVAAQG (119 aa)) is regulatory domain.

The protein belongs to the alpha-IPM synthase/homocitrate synthase family. LeuA type 1 subfamily. As to quaternary structure, homodimer. Mn(2+) serves as cofactor.

Its subcellular location is the cytoplasm. The enzyme catalyses 3-methyl-2-oxobutanoate + acetyl-CoA + H2O = (2S)-2-isopropylmalate + CoA + H(+). It functions in the pathway amino-acid biosynthesis; L-leucine biosynthesis; L-leucine from 3-methyl-2-oxobutanoate: step 1/4. Functionally, catalyzes the condensation of the acetyl group of acetyl-CoA with 3-methyl-2-oxobutanoate (2-ketoisovalerate) to form 3-carboxy-3-hydroxy-4-methylpentanoate (2-isopropylmalate). This is 2-isopropylmalate synthase from Verminephrobacter eiseniae (strain EF01-2).